The chain runs to 424 residues: MLFTIEQLELIKKLQHTGMSSDQLLKAFGELEVPEQLQNNNTIAAALYSPLLVQHLTTPKSETPVKLTVQTVPTPVKSEPQSSNCSSPFEHPICSNAPRPIRSQRTPMKEITTLDDPNELEEFMKQGEEACILDMKTFITQYSLRQTTVAMMTGVSQPYISKLLNGNHRELSLRCRKNIYCWYLNCRRHPNKLAAFLADPTTRLETNGDGELIPQRRERYVFRPILIRMLESFFTQTPFPDLPRRVEIANACNHVLKMDKKGVGLMPKEVVSPQVVSNWFANKRKELRRRSAEASAASTSSASSSASSTANHDSVSVSSMSPRDEETSSRNTTPETAISPSPAVSTFEVSRPSAIISATSSTTSPISIPATIIPSVSPSALELFAMAQQLGVQLPVPFPTLPTHFFPFQMAPFYGNPASILKSE.

The HNF-p1 domain maps to 1-30; sequence MLFTIEQLELIKKLQHTGMSSDQLLKAFGE. A POU-specific atypical domain is found at 103–199; the sequence is SQRTPMKEIT…PNKLAAFLAD (97 aa). Positions 215 to 291 form a DNA-binding region, homeobox; sequence QRRERYVFRP…NKRKELRRRS (77 aa). Residues 291-345 are disordered; sequence SAEASAASTSSASSSASSTANHDSVSVSSMSPRDEETSSRNTTPETAISPSPAVS. Positions 293-310 are enriched in low complexity; it reads EASAASTSSASSSASSTA. 2 stretches are compositionally biased toward polar residues: residues 311-321 and 329-345; these read NHDSVSVSSMS and SRNT…PAVS.

Belongs to the HMBOX1 homeobox family. As to expression, expressed in both AWC neurons. Also expressed in the FLP mechanosensory neurons.

The protein localises to the nucleus. In terms of biological role, transcriptional repressor which maintains cell fate asymmetry of AWC neurons in adults by repressing the expression of multiple AWC (OFF) genes, including srsx-3 in the AWC (ON) neuron. In Caenorhabditis elegans, this protein is Homeobox-containing protein 1.